Here is a 157-residue protein sequence, read N- to C-terminus: Endoribonuclease YbeY (157 aa).

Positions 123, 127, and 133 each coordinate Zn(2+).

It belongs to the endoribonuclease YbeY family. The cofactor is Zn(2+).

It localises to the cytoplasm. Functionally, single strand-specific metallo-endoribonuclease involved in late-stage 70S ribosome quality control and in maturation of the 3' terminus of the 16S rRNA. This chain is Endoribonuclease YbeY, found in Desulfitobacterium hafniense (strain Y51).